Here is a 60-residue protein sequence, read N- to C-terminus: Putative potassium channel blocker TXKS1 (60 aa).

The N-terminal stretch at 1–28 (MNRLTTIILMLIVINVIMDDISESKVAA) is a signal peptide. 3 disulfide bridges follow: C32/C49, C35/C55, and C39/C57. Position 59 is a lysine amide (K59).

Expressed by the venom gland.

The protein localises to the secreted. Its function is as follows. Inhibits potassium channels. This Olivierus martensii (Manchurian scorpion) protein is Putative potassium channel blocker TXKS1.